Consider the following 275-residue polypeptide: Light-independent protochlorophyllide reductase iron-sulfur ATP-binding protein (275 aa).

ATP contacts are provided by residues 12 to 17 (GIGKST) and lysine 41. Residue serine 16 participates in Mg(2+) binding. Residues cysteine 97 and cysteine 131 each coordinate [4Fe-4S] cluster. 182 to 183 (NR) lines the ATP pocket.

Belongs to the NifH/BchL/ChlL family. As to quaternary structure, homodimer. Protochlorophyllide reductase is composed of three subunits; BchL, BchN and BchB. It depends on [4Fe-4S] cluster as a cofactor.

The catalysed reaction is chlorophyllide a + oxidized 2[4Fe-4S]-[ferredoxin] + 2 ADP + 2 phosphate = protochlorophyllide a + reduced 2[4Fe-4S]-[ferredoxin] + 2 ATP + 2 H2O. The protein operates within porphyrin-containing compound metabolism; bacteriochlorophyll biosynthesis (light-independent). In terms of biological role, component of the dark-operative protochlorophyllide reductase (DPOR) that uses Mg-ATP and reduced ferredoxin to reduce ring D of protochlorophyllide (Pchlide) to form chlorophyllide a (Chlide). This reaction is light-independent. The L component serves as a unique electron donor to the NB-component of the complex, and binds Mg-ATP. In Chlorobium phaeovibrioides (strain DSM 265 / 1930) (Prosthecochloris vibrioformis (strain DSM 265)), this protein is Light-independent protochlorophyllide reductase iron-sulfur ATP-binding protein.